The primary structure comprises 178 residues: Flagellar transcriptional regulator FlhC (178 aa).

Zn(2+) is bound by residues Cys-138, Cys-141, Cys-158, and Cys-161.

The protein belongs to the FlhC family. Heterohexamer composed of two FlhC and four FlhD subunits. Each FlhC binds a FlhD dimer, forming a heterotrimer, and a hexamer assembles by dimerization of two heterotrimers. Zn(2+) serves as cofactor.

It localises to the cytoplasm. Functionally, functions in complex with FlhD as a master transcriptional regulator that regulates transcription of several flagellar and non-flagellar operons by binding to their promoter region. Activates expression of class 2 flagellar genes, including fliA, which is a flagellum-specific sigma factor that turns on the class 3 genes. Also regulates genes whose products function in a variety of physiological pathways. The sequence is that of Flagellar transcriptional regulator FlhC from Erwinia tasmaniensis (strain DSM 17950 / CFBP 7177 / CIP 109463 / NCPPB 4357 / Et1/99).